The following is a 119-amino-acid chain: Holo-[acyl-carrier-protein] synthase (119 aa).

Positions 8 and 58 each coordinate Mg(2+).

It belongs to the P-Pant transferase superfamily. AcpS family. Mg(2+) serves as cofactor.

The protein resides in the cytoplasm. The enzyme catalyses apo-[ACP] + CoA = holo-[ACP] + adenosine 3',5'-bisphosphate + H(+). In terms of biological role, transfers the 4'-phosphopantetheine moiety from coenzyme A to a Ser of acyl-carrier-protein. The protein is Holo-[acyl-carrier-protein] synthase of Oceanobacillus iheyensis (strain DSM 14371 / CIP 107618 / JCM 11309 / KCTC 3954 / HTE831).